A 217-amino-acid polypeptide reads, in one-letter code: Methylthioribulose-1-phosphate dehydratase (217 aa).

2 residues coordinate Zn(2+): His106 and His108.

This sequence belongs to the aldolase class II family. MtnB subfamily. Zn(2+) serves as cofactor.

It carries out the reaction 5-(methylsulfanyl)-D-ribulose 1-phosphate = 5-methylsulfanyl-2,3-dioxopentyl phosphate + H2O. It functions in the pathway amino-acid biosynthesis; L-methionine biosynthesis via salvage pathway; L-methionine from S-methyl-5-thio-alpha-D-ribose 1-phosphate: step 2/6. Functionally, catalyzes the dehydration of methylthioribulose-1-phosphate (MTRu-1-P) into 2,3-diketo-5-methylthiopentyl-1-phosphate (DK-MTP-1-P). This chain is Methylthioribulose-1-phosphate dehydratase, found in Xanthomonas campestris pv. campestris (strain B100).